A 943-amino-acid polypeptide reads, in one-letter code: 2-oxoglutarate dehydrogenase E1 component (943 aa).

It belongs to the alpha-ketoglutarate dehydrogenase family. As to quaternary structure, homodimer. Part of the 2-oxoglutarate dehydrogenase (OGDH) complex composed of E1 (2-oxoglutarate dehydrogenase), E2 (dihydrolipoamide succinyltransferase) and E3 (dihydrolipoamide dehydrogenase); the complex contains multiple copies of the three enzymatic components (E1, E2 and E3). Requires thiamine diphosphate as cofactor.

The enzyme catalyses N(6)-[(R)-lipoyl]-L-lysyl-[protein] + 2-oxoglutarate + H(+) = N(6)-[(R)-S(8)-succinyldihydrolipoyl]-L-lysyl-[protein] + CO2. In terms of biological role, E1 component of the 2-oxoglutarate dehydrogenase (OGDH) complex which catalyzes the decarboxylation of 2-oxoglutarate, the first step in the conversion of 2-oxoglutarate to succinyl-CoA and CO(2). The chain is 2-oxoglutarate dehydrogenase E1 component (sucA) from Azotobacter vinelandii.